Here is a 269-residue protein sequence, read N- to C-terminus: MISLKNFGLLFWKRFSENKLNQVAGALTYSTMLAMVPLVMVIFSIFSAFPVFNEVTGELKEMIFTNFAPSASDMVGEYIDQFVSNSKKMSAVGIVSLIAVALMLINNIDRTLNSIWHNSQSRSPLSSFAIYWMILTLGPLIIGVSIGISSYIKIMFEQSEHLSLGLKLLSFVPFLFTWFIFTLIYTVVPNKKVKIKHSAYGAFLAAIFFTLGKQAFTWYIVTFPSYQLIYGAMATLPIMLLWIQISWLVVLVGAQLASTLDEIGEQIEQ.

Helical transmembrane passes span 32 to 52 (MLAM…FPVF), 89 to 109 (MSAV…NNID), 128 to 148 (FAIY…SIGI), 168 to 188 (LLSF…YTVV), 203 to 223 (FLAA…IVTF), and 232 to 252 (AMAT…VVLV).

Belongs to the UPF0761 family.

The protein resides in the cell inner membrane. In Haemophilus influenzae (strain ATCC 51907 / DSM 11121 / KW20 / Rd), this protein is UPF0761 membrane protein HI_0276.